A 260-amino-acid chain; its full sequence is Transcription factor MYB4 (260 aa).

HTH myb-type domains follow at residues 12–64 and 65–119; these read AVEV…LNYL and RPGI…SKRS. 2 consecutive DNA-binding regions (H-T-H motif) follow at residues 40–64 and 92–115; these read WRMLPAKAGLKRCGKSCRLRWLNYL and WSIIAGRIPGRTDNEIKNHWNTHL.

Its subcellular location is the nucleus. Its function is as follows. Transcription activator involved in the spatiotemporal regulation of flavonoid biosynthesis specifically in the corms of Montbretia. Activates the promoters of enzymes involved in the biosynthesis of the flavonol myricetin and the flavonol-glycoside montbretin A (MbA). MbA is a potent inhibitor of human pancreatic alpha-amylase and is being developed as drug candidate to treat type-2 diabetes. The chain is Transcription factor MYB4 from Crocosmia x crocosmiiflora (Montbretia).